The sequence spans 133 residues: Small ribosomal subunit protein bS16 (133 aa).

Over residues 83–101 (KRDARSNPKKAEPGKKAQE) the composition is skewed to basic and acidic residues. Residues 83–102 (KRDARSNPKKAEPGKKAQER) are disordered.

The protein belongs to the bacterial ribosomal protein bS16 family.

The polypeptide is Small ribosomal subunit protein bS16 (Mesorhizobium japonicum (strain LMG 29417 / CECT 9101 / MAFF 303099) (Mesorhizobium loti (strain MAFF 303099))).